A 358-amino-acid chain; its full sequence is CCAAT/enhancer-binding protein alpha (358 aa).

A disordered region spans residues Met1–Ile55. The segment at Met1 to Pro70 is required to repress E2F1:TFDP1-mediated transcription, to inhibit cell cycle and to induce adipocyte differentiation. Low complexity predominate over residues Ala29–Pro39. Residues Ala40–Pro49 are compositionally biased toward pro residues. Residues Gly54 to Ala72 are required for interaction with TRIB1. Residues Pro128 to Pro204 form a required to induce adipocyte differentiation region. Lys161 carries the post-translational modification N6-acetyllysine; alternate. Residue Lys161 forms a Glycyl lysine isopeptide (Lys-Gly) (interchain with G-Cter in SUMO2); alternate linkage. Disordered stretches follow at residues Leu178–Leu201 and Thr217–Arg291. 2 stretches are compositionally biased toward pro residues: residues Tyr181–Ala199 and His224–Ala238. Residues Gln182 to Pro198 are required to functionally cooperate with SREBF1 in promoter activation. A Phosphoserine modification is found at Ser190. Phosphothreonine; by GSK3 is present on residues Thr226 and Thr230. Ser234 is subject to Phosphoserine; by GSK3. Residues Pro239–Ala259 are compositionally biased toward low complexity. The interaction with FOXO1 stretch occupies residues Ala244 to Ala358. Residues Lys276–Arg291 show a composition bias toward basic and acidic residues. Residues Ser282 to Leu345 form the bZIP domain. The DNA-binding element occupies Tyr285–Arg300. The interval Arg286–Lys313 is basic motif. Positions Leu317–Leu345 are leucine-zipper.

The protein belongs to the bZIP family. C/EBP subfamily. Binds DNA as a homodimer and as a heterodimer. Can form stable heterodimers with CEBPB, CEBPD, CEBPE and CEBPG. Interacts with PRDM16. Interacts with UBN1. Interacts with ZNF638; this interaction increases transcriptional activation. Interacts with the complex TFDP2:E2F1; the interaction prevents CEBPA binding to target gene promoters and represses its transcriptional activity. Interacts with RB1. Interacts (when phosphorylated at Ser-190) with CDK2, CDK4, E2F4 and SMARCA2. Interacts with SREBPF1. Interacts with FOXO1 (via the Fork-head domain); the interaction increases when FOXO1 is deacetylated. Interacts with SIX1. Interacts (via recognition sequence) with TRIB1. Interacts (via bZIP domain) with OVOL2 (via zinc-finger domains); the interaction inhibits the transcription factor activity of CEBPA and is required to repress adipogenesis. As to quaternary structure, interacts with TAF1A and UBTF. In terms of assembly, interacts with TAF1A and UBTF. Interacts with NPM1. (Microbial infection) Interacts with HBV protein X. As to quaternary structure, (Microbial infection) Interacts with Epstein-Barr virus lytic switch protein BZLF1; this interaction induces G1 cell cycle arrest. Phosphorylation at Ser-190 is required for interaction with CDK2, CDK4 and SWI/SNF complex leading to cell cycle inhibition. Dephosphorylated at Ser-190 by protein phosphatase 2A (PP2A) through PI3K/AKT signaling pathway regulation. Phosphorylation at Thr-226 and Thr-230 by GSK3 is constitutive in adipose tissue and lung. In liver, both Thr-226 and Thr-230 are phosphorylated only during feeding but not during fasting. Phosphorylation of the GSK3 consensus sites selectively decreases transactivation activity on IRE-controlled promoters. Post-translationally, sumoylated, sumoylation blocks the inhibitory effect on cell proliferation by disrupting the interaction with SMARCA2. In terms of processing, ubiquitinated by COP1 upon interaction with TRIB1.

Its subcellular location is the nucleus. It is found in the nucleolus. In terms of biological role, transcription factor that coordinates proliferation arrest and the differentiation of myeloid progenitors, adipocytes, hepatocytes, and cells of the lung and the placenta. Binds directly to the consensus DNA sequence 5'-T[TG]NNGNAA[TG]-3' acting as an activator on distinct target genes. During early embryogenesis, plays essential and redundant functions with CEBPB. Essential for the transition from common myeloid progenitors (CMP) to granulocyte/monocyte progenitors (GMP). Critical for the proper development of the liver and the lung. Necessary for terminal adipocyte differentiation, is required for postnatal maintenance of systemic energy homeostasis and lipid storage. To regulate these different processes at the proper moment and tissue, interplays with other transcription factors and modulators. Down-regulates the expression of genes that maintain cells in an undifferentiated and proliferative state through E2F1 repression, which is critical for its ability to induce adipocyte and granulocyte terminal differentiation. Reciprocally E2F1 blocks adipocyte differentiation by binding to specific promoters and repressing CEBPA binding to its target gene promoters. Proliferation arrest also depends on a functional binding to SWI/SNF complex. In liver, regulates gluconeogenesis and lipogenesis through different mechanisms. To regulate gluconeogenesis, functionally cooperates with FOXO1 binding to IRE-controlled promoters and regulating the expression of target genes such as PCK1 or G6PC1. To modulate lipogenesis, interacts and transcriptionally synergizes with SREBF1 in promoter activation of specific lipogenic target genes such as ACAS2. In adipose tissue, seems to act as FOXO1 coactivator accessing to ADIPOQ promoter through FOXO1 binding sites. Functionally, can act as dominant-negative. Binds DNA and have transctivation activity, even if much less efficiently than isoform 2. Does not inhibit cell proliferation. Directly and specifically enhances ribosomal DNA transcription interacting with RNA polymerase I-specific cofactors and inducing histone acetylation. This is CCAAT/enhancer-binding protein alpha from Homo sapiens (Human).